The primary structure comprises 547 residues: MNKLIRRAVTIFAVTSVASLFASGVLETSMAESLSTNVISLADTKAKDNTSHKSKKARKNHSKETLVDRKEVAPVHESKATGPKQDSCFGRMYTVKVNDDRNVEITQAVPEYATVGSPYPIEITATGKRDCVDVIITQQLPCEAEFVRSDPATTPTADGKLVWKIDRLGQGEKSKITVWVKPLKEGCCFTAATVCACPEIRSVTKCGQPAICVKQEGPENACLRCPVVYKINVVNQGTAIARNVVVENPVPDGYAHSSGQRVLTFTLGDMQPGEHRTITVEFCPLKRGRATNIATVSYCGGHKNTASVTTVINEPCVQVSIAGADWSYVCKPVEYVISVSNPGDLVLRDVVVEDTLSPGVTVLEAAGAQISCNKVVWTVKELNPGESLQYKVLVRAQTPGQFTNNVVVKSCSDCGTCTSCAEATTYWKGVAATHMCVVDTCDPVCVGENTVYRICVTNRGSAEDTNVSLMLKFSKELQPVSFSGPTKGTITGNTVVFDSLPRLGSKETVEFSVTLKAVSAGDARGEAILSSDTLTVPVSDTENTHIY.

The N-terminal stretch at 1 to 22 is a signal peptide; the sequence is MNKLIRRAVTIFAVTSVASLFA. The propeptide occupies 23–40; it reads SGVLETSMAESLSTNVIS. Residues 46–83 are disordered; it reads AKDNTSHKSKKARKNHSKETLVDRKEVAPVHESKATGP. A compositionally biased stretch (basic residues) spans 52–61; the sequence is HKSKKARKNH. Residues 62–79 show a composition bias toward basic and acidic residues; sequence SKETLVDRKEVAPVHESK.

Part of a disulfide cross-linked outer membrane complex (COMC) composed of the major outer membrane porin (MOMP), the small cysteine-rich protein (OmcA) and the large cysteine-rich periplasmic protein (OmcB).

It is found in the periplasm. Its function is as follows. In elementary bodies (EBs, the infectious stage, which is able to survive outside the host cell) provides the structural integrity of the outer envelope through disulfide cross-links with the small cysteine-rich protein and the major outer membrane protein. It has been described in publications as the Sarkosyl-insoluble COMC (Chlamydia outer membrane complex), and serves as the functional equivalent of peptidoglycan. This chain is Large cysteine-rich periplasmic protein OmcB, serovar E (omcB), found in Chlamydia trachomatis.